Here is a 265-residue protein sequence, read N- to C-terminus: Bidirectional sugar transporter NEC1 (265 aa).

The Extracellular segment spans residues 1 to 8 (MAQLRADD). Residues 9–29 (LSFIFGLLGNIVSFMVFLAPV) form a helical membrane-spanning segment. The MtN3/slv 1 domain maps to 11-97 (FIFGLLGNIV…SLFLFYAPRK (87 aa)). The Cytoplasmic segment spans residues 30–44 (PTFYKIYKRKSSEGY). A helical membrane pass occupies residues 45–65 (QAIPYMVALFSAGLLLYYAYL). At 66 to 71 (RKNAYL) the chain is on the extracellular side. The chain crosses the membrane as a helical span at residues 72–92 (IVSINGFGCAIELTYISLFLF). The Cytoplasmic portion of the chain corresponds to 93–103 (YAPRKSKIFTG). The chain crosses the membrane as a helical span at residues 104 to 124 (WLMLLELGALGMVMPITYLLA). Topologically, residues 125–130 (EGSHRV) are extracellular. The chain crosses the membrane as a helical span at residues 131–151 (MIVGWICAAINVAVFAAPLSI). A MtN3/slv 2 domain is found at 132–216 (IVGWICAAIN…LLYFVYKDSK (85 aa)). At 152 to 164 (MRQVIKTKSVEFM) the chain is on the cytoplasmic side. A helical transmembrane segment spans residues 165 to 185 (PFTLSLFLTLCATMWFFYGFF). The Extracellular portion of the chain corresponds to 186-190 (KKDFY). A helical transmembrane segment spans residues 191-211 (IAFPNILGFLFGIVQMLLYFV). At 212–265 (YKDSKRIDDEKSDPVREATKSKEGVEIIINIEDDNSDNALQSMEKDFSRLRTSK) the chain is on the cytoplasmic side.

This sequence belongs to the SWEET sugar transporter family. Forms homooligomers and/or heterooligomers. Highly expressed in nectary tissue and weakly in the stamen, especially in stomium cells and in the upper part of the filaments.

It localises to the cell membrane. Its function is as follows. Mediates both low-affinity uptake and efflux of sugar across the plasma membrane. Promotes the formation of phloem bundles in mid-veins. Probably involved in the development of stomium cells that control anther opening time. Required for pollen viability. This is Bidirectional sugar transporter NEC1 (NEC1) from Petunia hybrida (Petunia).